We begin with the raw amino-acid sequence, 101 residues long: MAAKLKKGDRVVVLAGKDKGKQGEITAVMPKDNKAVVEGVNVAIRHTKQTPTAQGGRLAKAMPIDLSNLALLDANGKATRVGFRFEGEKKVRYAKTTGDVI.

It belongs to the universal ribosomal protein uL24 family. As to quaternary structure, part of the 50S ribosomal subunit.

Its function is as follows. One of two assembly initiator proteins, it binds directly to the 5'-end of the 23S rRNA, where it nucleates assembly of the 50S subunit. Functionally, one of the proteins that surrounds the polypeptide exit tunnel on the outside of the subunit. The chain is Large ribosomal subunit protein uL24 from Cereibacter sphaeroides (strain ATCC 17029 / ATH 2.4.9) (Rhodobacter sphaeroides).